A 326-amino-acid polypeptide reads, in one-letter code: MTKYAKIIGTGSYLPPRRVTNQDLAAQLAEKGIETSDEWIFSRSGISARHWADPDVASSDLAVKAAEQAIEAAGIDRQSIDLILVATSTPDFVFPSTACIIQNKLGINNQCAAFDLQAVCSGFVYALATADKFIRSGSHRNVLVIGTEVFSRILDFNDRTTCVLFGDGAGAVVLSASDEPGILSTAMHSDGSHVGILCVPGNVHGGAIAGNAFLHMDGQAVFKLAVTVLDKVARETMAAAEIQPEQIDWLIPHQANIRIMQGTARKLGLPAERMIAVVHEHGNTSAASIPLALDAAVRDGRIRPGQTVLMEGVGGGFTWGAALLRM.

Residues cysteine 120 and histidine 253 contribute to the active site. Positions 254–258 are ACP-binding; sequence QANIR. Asparagine 283 is a catalytic residue.

Belongs to the thiolase-like superfamily. FabH family. As to quaternary structure, homodimer.

The protein resides in the cytoplasm. The catalysed reaction is malonyl-[ACP] + acetyl-CoA + H(+) = 3-oxobutanoyl-[ACP] + CO2 + CoA. Its pathway is lipid metabolism; fatty acid biosynthesis. Functionally, catalyzes the condensation reaction of fatty acid synthesis by the addition to an acyl acceptor of two carbons from malonyl-ACP. Catalyzes the first condensation reaction which initiates fatty acid synthesis and may therefore play a role in governing the total rate of fatty acid production. Possesses both acetoacetyl-ACP synthase and acetyl transacylase activities. Its substrate specificity determines the biosynthesis of branched-chain and/or straight-chain of fatty acids. This Cupriavidus pinatubonensis (strain JMP 134 / LMG 1197) (Cupriavidus necator (strain JMP 134)) protein is Beta-ketoacyl-[acyl-carrier-protein] synthase III.